The following is a 173-amino-acid chain: MPRTQKNDNFVDKSFTVMADIILKILPTNKKAKEAFVYYRDGMSAQAEGEYAEALEYYEEALTLEEDTNDRGYILYNMGLIYASNGDHNKALELYHQAIELNPRLPQALNNIAVIYHYQGEKEKEAGDNEAGEALFDQAADYWIRAIRMAPNNYIEAQNWLKTTGRSQIDVFF.

TPR repeat units follow at residues 35-68 (AFVY…EEDT), 72-105 (GYIL…NPRL), and 120-153 (GEKE…APNN).

Belongs to the Ycf3 family.

The protein localises to the cellular thylakoid membrane. Its function is as follows. Essential for the assembly of the photosystem I (PSI) complex. May act as a chaperone-like factor to guide the assembly of the PSI subunits. The polypeptide is Photosystem I assembly protein Ycf3 (Nostoc punctiforme (strain ATCC 29133 / PCC 73102)).